Consider the following 404-residue polypeptide: Glucose-1-phosphate adenylyltransferase (404 aa).

Alpha-D-glucose 1-phosphate contacts are provided by residues Y99, G164, 179 to 180 (EK), and S197.

This sequence belongs to the bacterial/plant glucose-1-phosphate adenylyltransferase family.

It carries out the reaction alpha-D-glucose 1-phosphate + ATP + H(+) = ADP-alpha-D-glucose + diphosphate. The protein operates within capsule biogenesis; capsule polysaccharide biosynthesis. It functions in the pathway glycan biosynthesis; glycogen biosynthesis. Its function is as follows. Involved in the biosynthesis of ADP-glucose, a building block, required in the biosynthesis of maltose-1-phosphate (M1P) and in the elongation reactions to produce linear alpha-1,4-glucans. Catalyzes the reaction between ATP and alpha-D-glucose 1-phosphate (G1P) to produce pyrophosphate and ADP-Glc. This chain is Glucose-1-phosphate adenylyltransferase, found in Mycobacterium marinum (strain ATCC BAA-535 / M).